The primary structure comprises 433 residues: Myricetin 3-O-glucosyl 1,2-rhamnoside 6'-O-caffeoyltransferase AT1 (433 aa).

Residues histidine 157 and aspartate 375 each act as proton acceptor in the active site.

It belongs to the plant acyltransferase family. In terms of tissue distribution, expressed in young cromes.

The enzyme catalyses myricetin 3-O-[beta-D-glucosyl-(1-&gt;2)-alpha-L-rhamnoside] + (E)-caffeoyl-CoA = myricetin 3-O-[(6-O-(E)-caffeoyl-beta-D-glucosyl)-(1-&gt;2)-alpha-L-rhamnoside] + CoA. It participates in flavonoid metabolism. Caffeoyltransferase involved in montbretin A (MbA) biosynthesis. Catalyzes the caffeoylation of myricetin 3-O-beta-D-glucosyl 1,2-alpha-L-rhamnoside (MRG) to produce myricetin 3-O-(6'-O-caffeoyl)-beta-D-glucosyl 1,2-alpha-L-rhamnoside (mini-MbA), a precursor of MbA. Mini-MbA and MbA are potent inhibitors of human pancreatic alpha-amylase and are being developed as drug candidates to treat type-2 diabetes. In vitro, is able to catalyze the caffeoylation of quercetin 3-O-sophoroside (QGG), although QGG may not be a physiological substrate in vivo. In vitro, can use coumaryl-CoA, feruloyl-CoA and acetyl-CoA, although these three acyl donors may not be physiological in vivo. This chain is Myricetin 3-O-glucosyl 1,2-rhamnoside 6'-O-caffeoyltransferase AT1, found in Crocosmia x crocosmiiflora (Montbretia).